A 128-amino-acid polypeptide reads, in one-letter code: Aspartate 1-decarboxylase (128 aa).

The Schiff-base intermediate with substrate; via pyruvic acid role is filled by S25. A Pyruvic acid (Ser) modification is found at S25. T57 is a substrate binding site. Catalysis depends on Y58, which acts as the Proton donor. Residue G73–A75 coordinates substrate.

The protein belongs to the PanD family. In terms of assembly, heterooctamer of four alpha and four beta subunits. The cofactor is pyruvate. In terms of processing, is synthesized initially as an inactive proenzyme, which is activated by self-cleavage at a specific serine bond to produce a beta-subunit with a hydroxyl group at its C-terminus and an alpha-subunit with a pyruvoyl group at its N-terminus.

Its subcellular location is the cytoplasm. The catalysed reaction is L-aspartate + H(+) = beta-alanine + CO2. Its pathway is cofactor biosynthesis; (R)-pantothenate biosynthesis; beta-alanine from L-aspartate: step 1/1. In terms of biological role, catalyzes the pyruvoyl-dependent decarboxylation of aspartate to produce beta-alanine. The chain is Aspartate 1-decarboxylase from Burkholderia cenocepacia (strain HI2424).